The chain runs to 384 residues: MAALTLRGVRELLKRVDLATVPRRHRYKKKWAATEPKFPAVRLALQNFDMTYSVQFGDLWPSIRVSLLSEQKYGALVNNFAAWDHVSAKLEQLSAKDFVNEAISHWELQSEGGQSAAPSPASWACSPNLRCFTFDRGDISRFPPARPGSLGVMEYYLMDAASLLPVLALGLQPGDIVLDLCAAPGGKTLALLQTGCCRNLAANDLSPSRIARLQKILHSYVPEEIRDGNQVRVTSWDGRKWGELEGDTYDRVLVDVPCTTDRHSLHEEENNIFKRSRKKERQILPVLQVQLLAAGLLATKPGGHVVYSTCSLSHLQNEYVVQGAIELLANQYSIQVQVEDLTHFRRVFMDTFCFFSSCQVGELVIPNLMANFGPMYFCKMRRLT.

The N-terminal 25 residues, 1 to 25 (MAALTLRGVRELLKRVDLATVPRRH), are a transit peptide targeting the mitochondrion. The S-adenosyl-L-methionine site is built by Gly-185, Gly-186, Lys-187, and Asp-204. Ser-206 is subject to Phosphoserine. S-adenosyl-L-methionine is bound by residues Arg-209, Asp-237, Gly-238, and Asp-255. The active-site Nucleophile is Cys-310.

This sequence belongs to the class I-like SAM-binding methyltransferase superfamily. RsmB/NOP family. As to quaternary structure, heterodimer with MTERFD2/MTERF4; this interaction seems to be required for NSUN4 recruitment to the mitochondrial large ribosomal subunit.

It is found in the mitochondrion. The enzyme catalyses a cytidine in rRNA + S-adenosyl-L-methionine = a 5-methylcytidine in rRNA + S-adenosyl-L-homocysteine + H(+). It carries out the reaction a cytidine in mRNA + S-adenosyl-L-methionine = a 5-methylcytidine in mRNA + S-adenosyl-L-homocysteine + H(+). Functionally, mitochondrial RNA cytosine C(5)-methyltransferase that methylates cytosine to 5-methylcytosine (m5C) in various RNAs, such as rRNAs, mRNAs and some long non-coding RNAs (lncRNAs). Involved in mitochondrial ribosome small subunit (SSU) maturation by catalyzing methylation of mitochondrial 12S rRNA; the function is independent of MTERFD2/MTERF4 and assembled mitochondrial ribosome large subunit (LSU). Targeted to LSU by MTERFD2/MTERF4 and probably is involved in a final step in ribosome biogenesis to ensure that SSU and LSU are assembled. In vitro can methylate 16S rRNA of the LSU; the methylation is enhanced by MTERFD/MTERF4. Also acts as a regulator of innate immunity by marking double-stranded mitochondrial RNAs(mt-dsRNAs) generated in response to stress: catalyzes m5C modification on mitochondrial RNAs, such as a mRNAs and lncRNAs, with a preference for the termini of light-strand lncRNAs, promoting their degradation and cytosolic release. Modified light-strand lncRNAs are then recognized by C1QBP reader and recruited to the mitochondrial degradosome complex, which promotes their degradation. This Homo sapiens (Human) protein is 5-cytosine rRNA methyltransferase NSUN4.